A 97-amino-acid polypeptide reads, in one-letter code: Large ribosomal subunit protein bL28 (97 aa).

It belongs to the bacterial ribosomal protein bL28 family.

This is Large ribosomal subunit protein bL28 from Rickettsia felis (strain ATCC VR-1525 / URRWXCal2) (Rickettsia azadi).